Consider the following 454-residue polypeptide: Bifunctional protein GlmU (454 aa).

The interval 1 to 225 (MNIVILAAGM…LWETLGVNSK (225 aa)) is pyrophosphorylase. UDP-N-acetyl-alpha-D-glucosamine is bound by residues 6–9 (LAAG), lysine 20, glutamine 71, 76–77 (GT), 98–100 (YGD), glycine 135, glutamate 150, asparagine 165, and asparagine 223. Residue aspartate 100 participates in Mg(2+) binding. Asparagine 223 provides a ligand contact to Mg(2+). The linker stretch occupies residues 226–246 (VQLAEIERIHQRNIAQRLLEA). The tract at residues 247 to 454 (GVTLLDPARI…WQRPVKQPKK (208 aa)) is N-acetyltransferase. Arginine 329 and lysine 347 together coordinate UDP-N-acetyl-alpha-D-glucosamine. The active-site Proton acceptor is the histidine 359. Tyrosine 362 and asparagine 373 together coordinate UDP-N-acetyl-alpha-D-glucosamine. Residues alanine 376, 382 to 383 (NY), serine 401, alanine 419, and arginine 436 contribute to the acetyl-CoA site.

It in the N-terminal section; belongs to the N-acetylglucosamine-1-phosphate uridyltransferase family. This sequence in the C-terminal section; belongs to the transferase hexapeptide repeat family. As to quaternary structure, homotrimer. Requires Mg(2+) as cofactor.

The protein localises to the cytoplasm. It carries out the reaction alpha-D-glucosamine 1-phosphate + acetyl-CoA = N-acetyl-alpha-D-glucosamine 1-phosphate + CoA + H(+). It catalyses the reaction N-acetyl-alpha-D-glucosamine 1-phosphate + UTP + H(+) = UDP-N-acetyl-alpha-D-glucosamine + diphosphate. Its pathway is nucleotide-sugar biosynthesis; UDP-N-acetyl-alpha-D-glucosamine biosynthesis; N-acetyl-alpha-D-glucosamine 1-phosphate from alpha-D-glucosamine 6-phosphate (route II): step 2/2. It participates in nucleotide-sugar biosynthesis; UDP-N-acetyl-alpha-D-glucosamine biosynthesis; UDP-N-acetyl-alpha-D-glucosamine from N-acetyl-alpha-D-glucosamine 1-phosphate: step 1/1. The protein operates within bacterial outer membrane biogenesis; LPS lipid A biosynthesis. Its function is as follows. Catalyzes the last two sequential reactions in the de novo biosynthetic pathway for UDP-N-acetylglucosamine (UDP-GlcNAc). The C-terminal domain catalyzes the transfer of acetyl group from acetyl coenzyme A to glucosamine-1-phosphate (GlcN-1-P) to produce N-acetylglucosamine-1-phosphate (GlcNAc-1-P), which is converted into UDP-GlcNAc by the transfer of uridine 5-monophosphate (from uridine 5-triphosphate), a reaction catalyzed by the N-terminal domain. This chain is Bifunctional protein GlmU, found in Cupriavidus metallidurans (strain ATCC 43123 / DSM 2839 / NBRC 102507 / CH34) (Ralstonia metallidurans).